Reading from the N-terminus, the 315-residue chain is tRNA-dihydrouridine(16) synthase (315 aa).

FMN-binding positions include Pro-7–Glu-9 and Gln-68. The Proton donor role is filled by Cys-98. Residues Lys-139, Asn-199 to Glu-201, and Gly-223 to Arg-224 each bind FMN.

Belongs to the Dus family. DusC subfamily. Requires FMN as cofactor.

It catalyses the reaction 5,6-dihydrouridine(16) in tRNA + NADP(+) = uridine(16) in tRNA + NADPH + H(+). The enzyme catalyses 5,6-dihydrouridine(16) in tRNA + NAD(+) = uridine(16) in tRNA + NADH + H(+). Functionally, catalyzes the synthesis of 5,6-dihydrouridine (D), a modified base found in the D-loop of most tRNAs, via the reduction of the C5-C6 double bond in target uridines. Specifically modifies U16 in tRNAs. The protein is tRNA-dihydrouridine(16) synthase of Aquipseudomonas alcaligenes (Pseudomonas alcaligenes).